We begin with the raw amino-acid sequence, 343 residues long: UDP-3-O-acylglucosamine N-acyltransferase (343 aa).

H238 (proton acceptor) is an active-site residue.

The protein belongs to the transferase hexapeptide repeat family. LpxD subfamily. Homotrimer.

It catalyses the reaction a UDP-3-O-[(3R)-3-hydroxyacyl]-alpha-D-glucosamine + a (3R)-hydroxyacyl-[ACP] = a UDP-2-N,3-O-bis[(3R)-3-hydroxyacyl]-alpha-D-glucosamine + holo-[ACP] + H(+). It participates in bacterial outer membrane biogenesis; LPS lipid A biosynthesis. In terms of biological role, catalyzes the N-acylation of UDP-3-O-acylglucosamine using 3-hydroxyacyl-ACP as the acyl donor. Is involved in the biosynthesis of lipid A, a phosphorylated glycolipid that anchors the lipopolysaccharide to the outer membrane of the cell. In Marinomonas sp. (strain MWYL1), this protein is UDP-3-O-acylglucosamine N-acyltransferase.